The following is a 448-amino-acid chain: Chromosomal replication initiator protein DnaA (448 aa).

Residues 1–73 (MNAQLKQLWT…INAIKLITSK (73 aa)) are domain I, interacts with DnaA modulators. Residues 73–109 (KKYNIEFSITSEEIFNNQQLKPKSSNDNIVVNDEMTS) form a domain II region. The interval 110–326 (ILNPKYTFDS…GALIRIVAYS (217 aa)) is domain III, AAA+ region. The ATP site is built by glycine 154, glycine 156, lysine 157, and threonine 158. Positions 327–448 (SLTNREISVD…DDLNKKITNN (122 aa)) are domain IV, binds dsDNA.

This sequence belongs to the DnaA family. In terms of assembly, oligomerizes as a right-handed, spiral filament on DNA at oriC.

The protein resides in the cytoplasm. Functionally, plays an essential role in the initiation and regulation of chromosomal replication. ATP-DnaA binds to the origin of replication (oriC) to initiate formation of the DNA replication initiation complex once per cell cycle. Binds the DnaA box (a 9 base pair repeat at the origin) and separates the double-stranded (ds)DNA. Forms a right-handed helical filament on oriC DNA; dsDNA binds to the exterior of the filament while single-stranded (ss)DNA is stabiized in the filament's interior. The ATP-DnaA-oriC complex binds and stabilizes one strand of the AT-rich DNA unwinding element (DUE), permitting loading of DNA polymerase. After initiation quickly degrades to an ADP-DnaA complex that is not apt for DNA replication. Binds acidic phospholipids. This chain is Chromosomal replication initiator protein DnaA, found in Clostridium novyi (strain NT).